A 55-amino-acid polypeptide reads, in one-letter code: Large ribosomal subunit protein bL33 (55 aa).

It belongs to the bacterial ribosomal protein bL33 family.

The protein is Large ribosomal subunit protein bL33 of Aromatoleum aromaticum (strain DSM 19018 / LMG 30748 / EbN1) (Azoarcus sp. (strain EbN1)).